Here is a 205-residue protein sequence, read N- to C-terminus: Isochorismatase domain-containing protein 2 (205 aa).

A phosphoserine mark is found at Ser-7 and Ser-202.

This sequence belongs to the isochorismatase family. In terms of assembly, interacts with CDKN2A.

Its subcellular location is the cytoplasm. It localises to the nucleus. The polypeptide is Isochorismatase domain-containing protein 2 (ISOC2) (Pongo abelii (Sumatran orangutan)).